Here is a 376-residue protein sequence, read N- to C-terminus: Putative F-box protein At2g33200 (376 aa).

One can recognise an F-box domain in the interval 6–53 (YDWSKLCHDILRLILESLHYKDYHRARTVCSNWYTASTTCKRPLYPWR).

This chain is Putative F-box protein At2g33200, found in Arabidopsis thaliana (Mouse-ear cress).